Consider the following 244-residue polypeptide: uncharacterized protein (244 aa).

A compositionally biased stretch (basic residues) spans 1 to 11 (MSRRSRSRSRS). 2 disordered regions span residues 1–104 (MSRR…TLNE) and 213–244 (ARQK…KFGK). Over residues 12–31 (PKRDREERKRREDRDRDRER) the composition is skewed to basic and acidic residues. The segment covering 32-46 (KRDRKDRERKRRHRS) has biased composition (basic residues). Positions 63-75 (FREERRRRERNES) are enriched in basic and acidic residues. The span at 77-89 (KLPPPPPPPPSDP) shows a compositional bias: pro residues. The segment covering 213 to 223 (ARQKSDMKKNE) has biased composition (basic and acidic residues). Polar residues predominate over residues 224–234 (QQAILNKSGNS).

This is an uncharacterized protein from Caenorhabditis elegans.